A 387-amino-acid chain; its full sequence is Pepsin-3 (387 aa).

The signal sequence occupies residues 1 to 15; that stretch reads MKWLLLLGLLALSEC. A propeptide spans 16 to 59 (activation peptide); it reads IIHKVPLVRKKSLRKNLIEKGLLKDYLKTHTPNLATKYLPKAAF. Residues 75-384 enclose the Peptidase A1 domain; it reads YFGTIGIGTP…DRANNQLGLA (310 aa). The active site involves D93. 2 disulfides stabilise this stretch: C106-C111 and C267-C271. D276 is a catalytic residue. A disulfide bridge connects residues C310 and C343.

Belongs to the peptidase A1 family.

The protein localises to the secreted. The catalysed reaction is Preferential cleavage: hydrophobic, preferably aromatic, residues in P1 and P1' positions. Cleaves 1-Phe-|-Val-2, 4-Gln-|-His-5, 13-Glu-|-Ala-14, 14-Ala-|-Leu-15, 15-Leu-|-Tyr-16, 16-Tyr-|-Leu-17, 23-Gly-|-Phe-24, 24-Phe-|-Phe-25 and 25-Phe-|-Tyr-26 bonds in the B chain of insulin.. In terms of biological role, shows particularly broad specificity; although bonds involving phenylalanine and leucine are preferred, many others are also cleaved to some extent. This is Pepsin-3 from Oryctolagus cuniculus (Rabbit).